A 204-amino-acid chain; its full sequence is MKNESTFIDVPAESSSAMKGKAPLIGVARDHTTSGSGGYNRGLAIFDFLLRLAAIVAALAAAATMGTSDETLPFFTQFLQFEASYDDLPTFQFFVIAMALVGGYLVLSLPISVVTILRPLATAPRLLLLVLDTGVLALNTAAASSAAAISYLAHSGNQNTNWLPICQQFGDFCQKSSGAVVSAFVSVVFFTILVVISGVALKRH.

Residues 1-42 are Cytoplasmic-facing; it reads MKNESTFIDVPAESSSAMKGKAPLIGVARDHTTSGSGGYNRG. A helical transmembrane segment spans residues 43 to 63; sequence LAIFDFLLRLAAIVAALAAAA. Residues 64 to 92 lie on the Extracellular side of the membrane; sequence TMGTSDETLPFFTQFLQFEASYDDLPTFQ. The chain crosses the membrane as a helical span at residues 93–113; the sequence is FFVIAMALVGGYLVLSLPISV. Over 114–125 the chain is Cytoplasmic; it reads VTILRPLATAPR. The chain crosses the membrane as a helical span at residues 126–146; it reads LLLLVLDTGVLALNTAAASSA. The Extracellular segment spans residues 147-178; that stretch reads AAISYLAHSGNQNTNWLPICQQFGDFCQKSSG. Residues 179 to 199 form a helical membrane-spanning segment; that stretch reads AVVSAFVSVVFFTILVVISGV. Residues 200 to 204 lie on the Cytoplasmic side of the membrane; it reads ALKRH.

The protein belongs to the Casparian strip membrane proteins (CASP) family. In terms of assembly, homodimer and heterodimers with other CASP proteins. Interacts with CASP1, CASP3 and CASP4.

The protein resides in the cell membrane. Regulates membrane-cell wall junctions and localized cell wall deposition. Required for establishment of the Casparian strip membrane domain (CSD) and the subsequent formation of Casparian strips, a cell wall modification of the root endodermis that determines an apoplastic barrier between the intraorganismal apoplasm and the extraorganismal apoplasm and prevents lateral diffusion. The chain is Casparian strip membrane protein 2 (CASP2) from Arabidopsis thaliana (Mouse-ear cress).